The primary structure comprises 436 residues: Enolase (436 aa).

Gln-167 lines the (2R)-2-phosphoglycerate pocket. Glu-209 (proton donor) is an active-site residue. Residues Asp-246, Glu-291, and Asp-318 each contribute to the Mg(2+) site. Lys-343, Arg-372, Ser-373, and Lys-394 together coordinate (2R)-2-phosphoglycerate. The active-site Proton acceptor is Lys-343.

This sequence belongs to the enolase family. As to quaternary structure, component of the RNA degradosome, a multiprotein complex involved in RNA processing and mRNA degradation. Mg(2+) is required as a cofactor.

It localises to the cytoplasm. The protein localises to the secreted. Its subcellular location is the cell surface. It carries out the reaction (2R)-2-phosphoglycerate = phosphoenolpyruvate + H2O. It functions in the pathway carbohydrate degradation; glycolysis; pyruvate from D-glyceraldehyde 3-phosphate: step 4/5. Functionally, catalyzes the reversible conversion of 2-phosphoglycerate (2-PG) into phosphoenolpyruvate (PEP). It is essential for the degradation of carbohydrates via glycolysis. The polypeptide is Enolase (Actinobacillus pleuropneumoniae serotype 3 (strain JL03)).